The sequence spans 43 residues: Bacteriocin leucocin-C (43 aa).

Cys-9 and Cys-14 are joined by a disulfide.

The protein resides in the secreted. Functionally, inhibits a wide spectrum of lactic acid bacteria. The sequence is that of Bacteriocin leucocin-C from Leuconostoc mesenteroides.